The sequence spans 23 residues: Basic phospholipase A2 CTs-G6 (23 aa).

The cofactor is Ca(2+). In terms of processing, contains 7 disulfide bonds. Expressed by the venom gland.

It localises to the secreted. It catalyses the reaction a 1,2-diacyl-sn-glycero-3-phosphocholine + H2O = a 1-acyl-sn-glycero-3-phosphocholine + a fatty acid + H(+). Functionally, snake venom phospholipase A2 (PLA2) that induces local edema a few hours after injection (5-10 ug) in the hind paw. PLA2 catalyzes the calcium-dependent hydrolysis of the 2-acyl groups in 3-sn-phosphoglycerides. The chain is Basic phospholipase A2 CTs-G6 from Trimeresurus stejnegeri (Chinese green tree viper).